The chain runs to 266 residues: DNA primase (266 aa).

The interval 244–266 is disordered; the sequence is VTTTTTPSPPKIGSMQTTTKSTT. The segment covering 257 to 266 has biased composition (polar residues); that stretch reads SMQTTTKSTT.

This sequence belongs to the baculoviridae LEF-1 family. Interacts with LEF-2.

In terms of biological role, plays an essential role in viral DNA replication. May generates single-stranded DNA for both leading and lagging strand synthesis. The primase initiates primer synthesis and thereby produces large amount of short RNA primers on the lagging strand that the polymerase elongates using dNTPs. In Autographa californica nuclear polyhedrosis virus (AcMNPV), this protein is DNA primase (LEF-1).